The primary structure comprises 270 residues: Phosphodiesterase YaeI (270 aa).

D56, H58, D88, N120, H209, and H211 together coordinate a divalent metal cation.

The protein belongs to the metallophosphoesterase superfamily. The cofactor is a divalent metal cation.

Shows phosphodiesterase activity, hydrolyzing phosphodiester bond in the artificial chromogenic substrate bis-p-nitrophenyl phosphate (bis-pNPP). This Escherichia coli (strain K12) protein is Phosphodiesterase YaeI (yaeI).